The chain runs to 256 residues: Small ribosomal subunit protein eS1 (256 aa).

A compositionally biased stretch (basic residues) spans 1–18 (MAVGKNKRLSKGKKGLKK). The tract at residues 1-20 (MAVGKNKRLSKGKKGLKKRT) is disordered. A2 carries the post-translational modification N-acetylalanine; partial.

The protein belongs to the eukaryotic ribosomal protein eS1 family. Component of the small ribosomal subunit. Mature ribosomes consist of a small (40S) and a large (60S) subunit. The 40S subunit contains about 33 different proteins and 1 molecule of RNA (18S). The 60S subunit contains about 49 different proteins and 3 molecules of RNA (25S, 5.8S and 5S).

It is found in the cytoplasm. The protein is Small ribosomal subunit protein eS1 (rps1) of Talaromyces stipitatus (strain ATCC 10500 / CBS 375.48 / QM 6759 / NRRL 1006) (Penicillium stipitatum).